The primary structure comprises 49 residues: Large ribosomal subunit protein bL33B (49 aa).

This sequence belongs to the bacterial ribosomal protein bL33 family.

The sequence is that of Large ribosomal subunit protein bL33B from Limosilactobacillus fermentum (strain NBRC 3956 / LMG 18251) (Lactobacillus fermentum).